The sequence spans 376 residues: N-acetyldiaminopimelate deacetylase (376 aa).

The active site involves aspartate 69. Residue glutamate 128 is the Proton acceptor of the active site.

Belongs to the peptidase M20A family. N-acetyldiaminopimelate deacetylase subfamily.

It catalyses the reaction N-acetyl-(2S,6S)-2,6-diaminopimelate + H2O = (2S,6S)-2,6-diaminopimelate + acetate. It functions in the pathway amino-acid biosynthesis; L-lysine biosynthesis via DAP pathway; LL-2,6-diaminopimelate from (S)-tetrahydrodipicolinate (acetylase route): step 3/3. Catalyzes the conversion of N-acetyl-diaminopimelate to diaminopimelate and acetate. The chain is N-acetyldiaminopimelate deacetylase from Bacillus thuringiensis subsp. konkukian (strain 97-27).